Reading from the N-terminus, the 129-residue chain is Follitropin subunit beta (129 aa).

The first 18 residues, 1–18 (MKSVQFCFLFCCWRAICC), serve as a signal peptide directing secretion. 6 disulfide bridges follow: cysteine 21–cysteine 69, cysteine 35–cysteine 84, cysteine 38–cysteine 122, cysteine 46–cysteine 100, cysteine 50–cysteine 102, and cysteine 105–cysteine 112. N-linked (GlcNAc...) asparagine glycans are attached at residues asparagine 25 and asparagine 42.

This sequence belongs to the glycoprotein hormones subunit beta family. As to quaternary structure, heterodimer. The active follitropin is a heterodimer composed of an alpha chain/CGA shared with other hormones and a unique beta chain/FSHB shown here.

It localises to the secreted. In terms of biological role, together with the alpha chain CGA constitutes follitropin, the follicle-stimulating hormone, and provides its biological specificity to the hormone heterodimer. Binds FSHR, a G protein-coupled receptor, on target cells to activate downstream signaling pathways. Follitropin is involved in follicle development and spermatogenesis in reproductive organs. In Capra hircus (Goat), this protein is Follitropin subunit beta (FSHB).